The primary structure comprises 128 residues: Aspartate 1-decarboxylase (128 aa).

Serine 25 functions as the Schiff-base intermediate with substrate; via pyruvic acid in the catalytic mechanism. Serine 25 bears the Pyruvic acid (Ser) mark. Threonine 57 serves as a coordination point for substrate. Residue tyrosine 58 is the Proton donor of the active site. 73–75 (GSA) contributes to the substrate binding site.

It belongs to the PanD family. As to quaternary structure, heterooctamer of four alpha and four beta subunits. Requires pyruvate as cofactor. Is synthesized initially as an inactive proenzyme, which is activated by self-cleavage at a specific serine bond to produce a beta-subunit with a hydroxyl group at its C-terminus and an alpha-subunit with a pyruvoyl group at its N-terminus.

Its subcellular location is the cytoplasm. The catalysed reaction is L-aspartate + H(+) = beta-alanine + CO2. The protein operates within cofactor biosynthesis; (R)-pantothenate biosynthesis; beta-alanine from L-aspartate: step 1/1. Its function is as follows. Catalyzes the pyruvoyl-dependent decarboxylation of aspartate to produce beta-alanine. This is Aspartate 1-decarboxylase from Burkholderia cenocepacia (strain HI2424).